The sequence spans 297 residues: ATP phosphoribosyltransferase (297 aa).

It belongs to the ATP phosphoribosyltransferase family.

The protein resides in the cytoplasm. The catalysed reaction is 1-(5-phospho-beta-D-ribosyl)-ATP + diphosphate = 5-phospho-alpha-D-ribose 1-diphosphate + ATP. The protein operates within amino-acid biosynthesis; L-histidine biosynthesis; L-histidine from 5-phospho-alpha-D-ribose 1-diphosphate: step 1/9. Functionally, catalyzes the condensation of ATP and 5-phosphoribose 1-diphosphate to form N'-(5'-phosphoribosyl)-ATP (PR-ATP). Has a crucial role in the pathway because the rate of histidine biosynthesis seems to be controlled primarily by regulation of the enzymatic activity. This Eremothecium gossypii (strain ATCC 10895 / CBS 109.51 / FGSC 9923 / NRRL Y-1056) (Yeast) protein is ATP phosphoribosyltransferase (HIS1).